Consider the following 452-residue polypeptide: Cytochrome b-c1 complex subunit 2, mitochondrial (452 aa).

Residues 1–14 (MKLLSRAGSFSRFY) constitute a mitochondrion transit peptide. 3 positions are modified to N6-acetyllysine: Lys-65, Lys-198, and Lys-249. A Phosphoserine modification is found at Ser-367.

Belongs to the peptidase M16 family. UQCRC2/QCR2 subfamily. As to quaternary structure, component of the ubiquinol-cytochrome c oxidoreductase (cytochrome b-c1 complex, complex III, CIII), a multisubunit enzyme composed of 11 subunits. The complex is composed of 3 respiratory subunits cytochrome b, cytochrome c1 and Rieske protein UQCRFS1, 2 core protein subunits UQCRC1/QCR1 and UQCRC2/QCR2, and 6 low-molecular weight protein subunits UQCRH/QCR6, UQCRB/QCR7, UQCRQ/QCR8, UQCR10/QCR9, UQCR11/QCR10 and subunit 9, the cleavage product of Rieske protein UQCRFS1. The complex exists as an obligatory dimer and forms supercomplexes (SCs) in the inner mitochondrial membrane with NADH-ubiquinone oxidoreductase (complex I, CI) and cytochrome c oxidase (complex IV, CIV), resulting in different assemblies (supercomplex SCI(1)III(2)IV(1) and megacomplex MCI(2)III(2)IV(2)). Interacts with RAB5IF. Interacts with STMP1. In terms of tissue distribution, expressed in the head region and flagellum of epididymal sperm.

The protein localises to the mitochondrion inner membrane. In terms of biological role, component of the ubiquinol-cytochrome c oxidoreductase, a multisubunit transmembrane complex that is part of the mitochondrial electron transport chain which drives oxidative phosphorylation. The respiratory chain contains 3 multisubunit complexes succinate dehydrogenase (complex II, CII), ubiquinol-cytochrome c oxidoreductase (cytochrome b-c1 complex, complex III, CIII) and cytochrome c oxidase (complex IV, CIV), that cooperate to transfer electrons derived from NADH and succinate to molecular oxygen, creating an electrochemical gradient over the inner membrane that drives transmembrane transport and the ATP synthase. The cytochrome b-c1 complex catalyzes electron transfer from ubiquinol to cytochrome c, linking this redox reaction to translocation of protons across the mitochondrial inner membrane, with protons being carried across the membrane as hydrogens on the quinol. In the process called Q cycle, 2 protons are consumed from the matrix, 4 protons are released into the intermembrane space and 2 electrons are passed to cytochrome c. The 2 core subunits UQCRC1/QCR1 and UQCRC2/QCR2 are homologous to the 2 mitochondrial-processing peptidase (MPP) subunits beta-MPP and alpha-MPP respectively, and they seem to have preserved their MPP processing properties. May be involved in the in situ processing of UQCRFS1 into the mature Rieske protein and its mitochondrial targeting sequence (MTS)/subunit 9 when incorporated into complex III. The polypeptide is Cytochrome b-c1 complex subunit 2, mitochondrial (Uqcrc2) (Rattus norvegicus (Rat)).